Consider the following 194-residue polypeptide: ATP synthase subunit 5, mitochondrial (194 aa).

As to quaternary structure, F-type ATP synthases have 2 components, the catalytic core F(1) and the membrane-embedded component F(0), linked together by a central stalk and a peripheral stalk. The central stalk, also called rotor shaft, is often seen as part of F(1). The peripheral stalk is seen as part of F(0). F(0) contains the membrane channel next to the rotor. F-type ATP synthases form dimers but each monomer functions independently in ATP generation. The dimer consists of 18 different polypeptides: ATP1 (subunit alpha, part of F(1), 3 molecules per monomer), ATP2 (subunit beta, part of F(1), 3 molecules per monomer), ATP3 (subunit gamma, part of the central stalk), ATP4 (subunit b, part of the peripheral stalk), ATP5/OSCP (subunit 5/OSCP, part of the peripheral stalk), ATP6 (subunit a, part of the peripheral stalk), ATP7 (subunit d, part of the peripheral stalk), ATP8 (subunit 8, part of the peripheral stalk), OLI1 (subunit c, part of the rotor, 10 molecules per monomer), ATP14 (subunit h, part of the peripheral stalk), ATP15 (subunit epsilon, part of the central stalk), ATP16 (subunit delta, part of the central stalk), ATP17 (subunit f, part of the peripheral stalk), ATP18 (subunit i/j, part of the peripheral stalk). Dimer-specific subunits are ATP19 (subunit k, at interface between monomers), ATP20 (subunit g, at interface between monomers), TIM11 (subunit e, at interface between monomers). Also contains subunit L.

It localises to the mitochondrion inner membrane. Its function is as follows. Mitochondrial membrane ATP synthase (F(1)F(0) ATP synthase or Complex V) produces ATP from ADP in the presence of a proton gradient across the membrane which is generated by electron transport complexes of the respiratory chain. F-type ATP synthases consist of two structural domains, F(1) - containing the extramembraneous catalytic core, and F(0) - containing the membrane proton channel, linked together by a central stalk and a peripheral stalk. During catalysis, ATP synthesis in the catalytic domain of F(1) is coupled via a rotary mechanism of the central stalk subunits to proton translocation. Part of the complex F(0) domain and the peripheral stalk, which acts as a stator to hold the catalytic alpha/ATP1(3)beta/ATP2(3) subcomplex and subunit a/ATP6 static relative to the rotary elements. The polypeptide is ATP synthase subunit 5, mitochondrial (Pichia angusta (Yeast)).